Here is a 403-residue protein sequence, read N- to C-terminus: MSKFNRMHLIVLDSVGIGAAPDANNFVNAGVPDGASDTLGHISKTVGLNVPNMAKLGLGNIPREQPLKTVPAESNPTGYATKLEEVSLGKDTMTGHWEIMGLNITEPFDTFWNGFPEEILTQIEEFSGRKVIRESNRPYSGTAVIDDFGPRQMETGELIIYTSADPVLQIAAHEDIIPVEELYRICEFARSITLERPALLGRIIARPYVGEPGNFTRTSNRRDLAISPFAPTVLDKLNEAGIDTYSVGKISDIFNGEGINHDMGHNKSNNHGVDNLIKAMTSEDFKHGFSFTNLVDFDALYGHRRNPQGYRDCLHEFDERLPEIIAAMKEDDLLMITADHGNDPTYAGTDHTREYIPFLAYSPSFKSSGLIPVGHFADISATIADNFGVEKAMIGESFLDKLV.

6 residues coordinate Mn(2+): D13, D298, H303, D339, H340, and H351.

Belongs to the phosphopentomutase family. It depends on Mn(2+) as a cofactor.

It is found in the cytoplasm. The enzyme catalyses 2-deoxy-alpha-D-ribose 1-phosphate = 2-deoxy-D-ribose 5-phosphate. The catalysed reaction is alpha-D-ribose 1-phosphate = D-ribose 5-phosphate. It functions in the pathway carbohydrate degradation; 2-deoxy-D-ribose 1-phosphate degradation; D-glyceraldehyde 3-phosphate and acetaldehyde from 2-deoxy-alpha-D-ribose 1-phosphate: step 1/2. Functionally, isomerase that catalyzes the conversion of deoxy-ribose 1-phosphate (dRib-1-P) and ribose 1-phosphate (Rib-1-P) to deoxy-ribose 5-phosphate (dRib-5-P) and ribose 5-phosphate (Rib-5-P), respectively. The polypeptide is Phosphopentomutase (Streptococcus thermophilus).